A 582-amino-acid polypeptide reads, in one-letter code: Inactive metallocarboxypeptidase ECM14 (582 aa).

A signal peptide spans 1–20 (MHILQVITGATLVSVPFVSA). The propeptide occupies 21-172 (IPSSTSEFLP…QAVYESYPQP (152 aa)). Positions 200–522 (DYQPLSVIIP…NAVLVFGQFL (323 aa)) constitute a Peptidase M14 domain. 2 residues coordinate Zn(2+): His-265 and Glu-268. Residues 265 to 268 (HARE), Arg-323, and 340 to 341 (DR) each bind substrate. A disulfide bridge connects residues Cys-334 and Cys-357. N-linked (GlcNAc...) asparagine glycosylation is found at Asn-381 and Asn-387. Zn(2+) is bound at residue His-397. Position 398 to 399 (398 to 399 (SY)) interacts with substrate. The span at 561 to 571 (SNQLEDDDNEN) shows a compositional bias: acidic residues. The tract at residues 561 to 582 (SNQLEDDDNENDTLLGFRTQKV) is disordered. Asn-571 carries an N-linked (GlcNAc...) asparagine glycan.

It belongs to the peptidase M14 family. It depends on Zn(2+) as a cofactor.

The protein localises to the vacuole. It localises to the secreted. Functionally, inactive carboxypeptidase that may play a role in cell wall organization and biogenesis. This Coccidioides posadasii (strain RMSCC 757 / Silveira) (Valley fever fungus) protein is Inactive metallocarboxypeptidase ECM14 (ECM14).